The primary structure comprises 1108 residues: MAAVMMNGVGPDGAMKPNLDQKLNNHGGDTKAISSSEIVQQQTPARSLQSDNPLRMNDLPDEIVHITENFLSLNQLLSRLAQRSHNELEDTIRSLAKKPLPMPPMLNGNADHNTIEDLSNENLDKKVTLLKFAQEQHAKWVKALVITDWSKKASTLSKLIDLKVHMHTQMEKYDFVLDRMMHNKRNLAYARLPSPDLKTALEVLANGDAPWMPDLGYIPPPEMSPEDQLKWLEDLDTLLSLRLTIDDHDKIPYHFRNYRIGSGRVTFIVKGEFEVDLTIADDDPEKQYWFIDFRFLFRPAPPGLSENLRMYLELKVNEVLGAEGLAGCYKYLHELVLTHKINELRRQAMELSVGRWVDALNVERLNRSLAVQYWTSRYPAKAPNAPKSWIIIGVHSAAPSGGLRATAPTSRLALRWFRDNQEVKDIEIPLDEADLSMERILKDVIGRHTQQILTLMHTGLRNKPRFVNKEDHLVLELSRKQPSESLLTMQLTKLDSMVVRVDQIGGTFAVQPRTRPMPMAESNLNTPGRDPVAVIGWVRNTFAMEELVRRGKSQGWVVGKPPVKPDDLRNILSNREQTDAMAWFRKQGWRPQFYVLAHLSMSGDQWWLIELTTPNSNSAASTAGGIRIRTHVQLQFASKQAIMESPSFFSDLNYFTSAMISKMRDLRELHSRRINHIDQPCIRPGLSSNIRMPTIFIRTSEVLPSLSGKGSLGRWAADEVRLSVANVQSSSSTEVDRRGENRSALSTRMDSRIVIASEARLRVLDKSKFRQLSSRVDRDVAFNHKTGEFVLQLRSELGETMIDKLISRLQTIERLYEFLGSISRAPRGVQCETVTLRRVVFTYSDLPQPVSEELAALQPPTKRWKVVLDFADPRTVKLVLEKNNPHIRAVDMLQTLANSPRGLERLPFYLPTTLAVYRALDSISDAWLQLQVSRKGTFEIFTKNIDLATIRYDLPGPQARRLTLDVKLVSRRGELSWHVKRTDAEPNKSNDEFSRVLKEVWNTKSPNWKSLSTSACGPASAGVEELLKGIDKAVRTLLESPPLVLQQQQQRQPVVQPGQQPQVQNQANGVMNRGPQRPGLPGAGGLGAQMRQKQVPQAPMGNHVVDLT.

Disordered stretches follow at residues methionine 1 to threonine 30, serine 35 to leucine 54, and glutamine 1048 to threonine 1108. Residues serine 35 to asparagine 52 show a composition bias toward polar residues. Low complexity predominate over residues glutamine 1048 to leucine 1080.

This sequence belongs to the Mediator complex subunit 14 family. Component of the Mediator complex.

Its subcellular location is the nucleus. In terms of biological role, component of the Mediator complex, a coactivator involved in the regulated transcription of nearly all RNA polymerase II-dependent genes. Mediator functions as a bridge to convey information from gene-specific regulatory proteins to the basal RNA polymerase II transcription machinery. Mediator is recruited to promoters by direct interactions with regulatory proteins and serves as a scaffold for the assembly of a functional preinitiation complex with RNA polymerase II and the general transcription factors. The polypeptide is Mediator of RNA polymerase II transcription subunit 14 (RGR1) (Pyricularia oryzae (strain 70-15 / ATCC MYA-4617 / FGSC 8958) (Rice blast fungus)).